Reading from the N-terminus, the 376-residue chain is MQCALYDAGRCRSCQWITQSVNEQLSAKTADLHRLLAGLPVEQWCAPISGPEQHFRNKAKMVVSGSVEKPLFGMLHRDGTPVDLCACPLYPASFAPVFSTLKPFIARAGLTPYNVARKRGELKYLLLTESQFDGGMMLRFVLRSETKLTQLRAALPWLRAQLPQLRVITANIQPVHMAIMEGETEIYLTDQQALAERFNDVPLWIRPQSFFQTNPTVASRLYATARDWVGQLPVRHMWDLFCGVGGFGLHCATPQMQLTGIEIAPEAIACAKQSAAELGLTRLHFQALDSTQFAIAQGETPDLVLVNPPRRGIGKPLCDYLAQMAPRFIIYSSCNAQTMAQDIRHLPNYRIQRVQLFDMFPHTAHYEVLTLLRRSI.

[4Fe-4S] cluster is bound by residues Cys-3, Cys-11, Cys-14, and Cys-87. Positions 212, 241, 262, and 307 each coordinate S-adenosyl-L-methionine. The active-site Nucleophile is the Cys-334.

This sequence belongs to the class I-like SAM-binding methyltransferase superfamily. RNA M5U methyltransferase family. RlmC subfamily.

The enzyme catalyses uridine(747) in 23S rRNA + S-adenosyl-L-methionine = 5-methyluridine(747) in 23S rRNA + S-adenosyl-L-homocysteine + H(+). Its function is as follows. Catalyzes the formation of 5-methyl-uridine at position 747 (m5U747) in 23S rRNA. In Salmonella newport (strain SL254), this protein is 23S rRNA (uracil(747)-C(5))-methyltransferase RlmC.